The following is a 145-amino-acid chain: D-aminoacyl-tRNA deacylase (145 aa).

The short motif at 137 to 138 is the Gly-cisPro motif, important for rejection of L-amino acids element; the sequence is GP.

It belongs to the DTD family. As to quaternary structure, homodimer.

It localises to the cytoplasm. The enzyme catalyses glycyl-tRNA(Ala) + H2O = tRNA(Ala) + glycine + H(+). It catalyses the reaction a D-aminoacyl-tRNA + H2O = a tRNA + a D-alpha-amino acid + H(+). In terms of biological role, an aminoacyl-tRNA editing enzyme that deacylates mischarged D-aminoacyl-tRNAs. Also deacylates mischarged glycyl-tRNA(Ala), protecting cells against glycine mischarging by AlaRS. Acts via tRNA-based rather than protein-based catalysis; rejects L-amino acids rather than detecting D-amino acids in the active site. By recycling D-aminoacyl-tRNA to D-amino acids and free tRNA molecules, this enzyme counteracts the toxicity associated with the formation of D-aminoacyl-tRNA entities in vivo and helps enforce protein L-homochirality. The protein is D-aminoacyl-tRNA deacylase of Colwellia psychrerythraea (strain 34H / ATCC BAA-681) (Vibrio psychroerythus).